The sequence spans 348 residues: Dihydroorotase (348 aa).

Zn(2+) contacts are provided by His-17 and His-19. Residues 19 to 21 (HLR) and Asn-45 contribute to the substrate site. Lys-103, His-140, and His-178 together coordinate Zn(2+). Lys-103 is subject to N6-carboxylysine. His-140 serves as a coordination point for substrate. Residue Leu-223 coordinates substrate. Residue Asp-251 participates in Zn(2+) binding. Residue Asp-251 is part of the active site. His-255 and Ala-267 together coordinate substrate.

The protein belongs to the metallo-dependent hydrolases superfamily. DHOase family. Class II DHOase subfamily. As to quaternary structure, homodimer. Zn(2+) is required as a cofactor.

It catalyses the reaction (S)-dihydroorotate + H2O = N-carbamoyl-L-aspartate + H(+). It functions in the pathway pyrimidine metabolism; UMP biosynthesis via de novo pathway; (S)-dihydroorotate from bicarbonate: step 3/3. Functionally, catalyzes the reversible cyclization of carbamoyl aspartate to dihydroorotate. The polypeptide is Dihydroorotase (Salmonella typhimurium (strain LT2 / SGSC1412 / ATCC 700720)).